We begin with the raw amino-acid sequence, 189 residues long: Parkinson disease protein 7 homolog (189 aa).

Position 2 is an N-acetylalanine (Ala2). Residues Cys46 and Cys53 are each lipidated (S-palmitoyl cysteine). Tyr67 is subject to Phosphotyrosine. The active-site Nucleophile is the Cys106. A Cysteine sulfinic acid (-SO2H); alternate modification is found at Cys106. A lipid anchor (S-palmitoyl cysteine; alternate) is attached at Cys106. The active site involves His126. Lys130 participates in a covalent cross-link: Glycyl lysine isopeptide (Lys-Gly) (interchain with G-Cter in SUMO). Lys148 bears the N6-acetyllysine mark. The residue at position 182 (Lys182) is an N6-succinyllysine.

This sequence belongs to the peptidase C56 family. As to quaternary structure, homodimer. Binds EFCAB6/DJBP and PIAS2. Part of a ternary complex containing PARK7, EFCAB6/DJBP and AR. Interacts (via N-terminus) with OTUD7B. Interacts with BBS1, HIPK1, CLCF1 and MTERF. Forms a complex with PINK1 and PRKN. Interacts (via C-terminus) with NCF1; the interaction is enhanced by LPS and modulates NCF1 phosphorylation and membrane translocation. Interacts with NENF. Deglycase activity does not require glutathione as a cofactor, however, glycated glutathione constitutes a PARK7 substrate. serves as cofactor. Sumoylated on Lys-130 by PIAS2 or PIAS4; which is essential for cell-growth promoting activity and transforming activity. Post-translationally, undergoes cleavage of a C-terminal peptide and subsequent activation of protease activity in response to oxidative stress.

It is found in the cell membrane. It localises to the cytoplasm. The protein localises to the nucleus. Its subcellular location is the membrane raft. The protein resides in the mitochondrion. It is found in the endoplasmic reticulum. It catalyses the reaction N(omega)-(1-hydroxy-2-oxopropyl)-L-arginyl-[protein] + H2O = lactate + L-arginyl-[protein] + H(+). It carries out the reaction N(6)-(1-hydroxy-2-oxopropyl)-L-lysyl-[protein] + H2O = lactate + L-lysyl-[protein] + H(+). The catalysed reaction is S-(1-hydroxy-2-oxopropyl)-L-cysteinyl-[protein] + H2O = lactate + L-cysteinyl-[protein] + H(+). The enzyme catalyses N(omega)-(1-hydroxy-2-oxoethyl)-L-arginyl-[protein] + H2O = L-arginyl-[protein] + glycolate + H(+). It catalyses the reaction N(6)-(1-hydroxy-2-oxoethyl)-L-lysyl-[protein] + H2O = glycolate + L-lysyl-[protein] + H(+). It carries out the reaction S-(1-hydroxy-2-oxoethyl)-L-cysteinyl-[protein] + H2O = glycolate + L-cysteinyl-[protein] + H(+). The catalysed reaction is N(2)-(1-hydroxy-2-oxopropyl)-dGTP + H2O = lactate + dGTP + H(+). The enzyme catalyses N(2)-(1-hydroxy-2-oxopropyl)-GTP + H2O = lactate + GTP + H(+). It catalyses the reaction N(2)-(1-hydroxy-2-oxopropyl)-GDP + H2O = lactate + GDP + H(+). It carries out the reaction N(2)-(1-hydroxy-2-oxopropyl)-GMP + H2O = lactate + GMP + H(+). The catalysed reaction is N(2)-(1-hydroxy-2-oxoethyl)-dGTP + H2O = dGTP + glycolate + H(+). The enzyme catalyses N(2)-(1-hydroxy-2-oxoethyl)-GTP + H2O = glycolate + GTP + H(+). It catalyses the reaction N(2)-(1-hydroxy-2-oxoethyl)-GDP + H2O = glycolate + GDP + H(+). It carries out the reaction N(2)-(1-hydroxy-2-oxoethyl)-GMP + H2O = glycolate + GMP + H(+). The catalysed reaction is an N(2)-(1-hydroxy-2-oxopropyl)-guanosine in RNA + H2O = a guanosine in RNA + lactate + H(+). The enzyme catalyses an N(2)-(1-hydroxy-2-oxopropyl)-2'-deoxyguanosine in DNA + H2O = a 2'-deoxyguanosine in DNA + lactate + H(+). It catalyses the reaction an N(2)-(1-hydroxy-2-oxoethyl)-guanosine in RNA + H2O = a guanosine in RNA + glycolate + H(+). It carries out the reaction an N(2)-(1-hydroxy-2-oxoethyl)-2'-deoxyguanosine in DNA + H2O = a 2'-deoxyguanosine in DNA + glycolate + H(+). Functionally, multifunctional protein with controversial molecular function which plays an important role in cell protection against oxidative stress and cell death acting as oxidative stress sensor and redox-sensitive chaperone and protease. It is involved in neuroprotective mechanisms like the stabilization of NFE2L2 and PINK1 proteins, male fertility as a positive regulator of androgen signaling pathway as well as cell growth and transformation through, for instance, the modulation of NF-kappa-B signaling pathway. Has been described as a protein and nucleotide deglycase that catalyzes the deglycation of the Maillard adducts formed between amino groups of proteins or nucleotides and reactive carbonyl groups of glyoxals. But this function is rebuted by other works. As a protein deglycase, repairs methylglyoxal- and glyoxal-glycated proteins, and releases repaired proteins and lactate or glycolate, respectively. Deglycates cysteine, arginine and lysine residues in proteins, and thus reactivates these proteins by reversing glycation by glyoxals. Acts on early glycation intermediates (hemithioacetals and aminocarbinols), preventing the formation of advanced glycation endproducts (AGE) that cause irreversible damage. Also functions as a nucleotide deglycase able to repair glycated guanine in the free nucleotide pool (GTP, GDP, GMP, dGTP) and in DNA and RNA. Is thus involved in a major nucleotide repair system named guanine glycation repair (GG repair), dedicated to reversing methylglyoxal and glyoxal damage via nucleotide sanitization and direct nucleic acid repair. Protects histones from adduction by methylglyoxal, controls the levels of methylglyoxal-derived argininine modifications on chromatin. Able to remove the glycations and restore histone 3, histone glycation disrupts both local and global chromatin architecture by altering histone-DNA interactions as well as histone acetylation and ubiquitination levels. Displays a very low glyoxalase activity that may reflect its deglycase activity. Eliminates hydrogen peroxide and protects cells against hydrogen peroxide-induced cell death. Required for correct mitochondrial morphology and function as well as for autophagy of dysfunctional mitochondria. Plays a role in regulating expression or stability of the mitochondrial uncoupling proteins SLC25A14 and SLC25A27 in dopaminergic neurons of the substantia nigra pars compacta and attenuates the oxidative stress induced by calcium entry into the neurons via L-type channels during pacemaking. Regulates astrocyte inflammatory responses, may modulate lipid rafts-dependent endocytosis in astrocytes and neuronal cells. In pancreatic islets, involved in the maintenance of mitochondrial reactive oxygen species (ROS) levels and glucose homeostasis in an age- and diet dependent manner. Protects pancreatic beta cells from cell death induced by inflammatory and cytotoxic setting. Binds to a number of mRNAs containing multiple copies of GG or CC motifs and partially inhibits their translation but dissociates following oxidative stress. Metal-binding protein able to bind copper as well as toxic mercury ions, enhances the cell protection mechanism against induced metal toxicity. In macrophages, interacts with the NADPH oxidase subunit NCF1 to direct NADPH oxidase-dependent ROS production, and protects against sepsis. This Chlorocebus aethiops (Green monkey) protein is Parkinson disease protein 7 homolog.